A 325-amino-acid polypeptide reads, in one-letter code: MARLPLKQFLADNPKKVLVLDGGQGTELENRGIKVANPVWSTIPFISESFWSDESSANRKIVKEMFNDFLNAGAEILMTTTYQTSYKSVSENTPIRTLSEYNNLLNRIVDFSRNCIGEDKYLIGCIGPWGAHICREFTGDYGAEPENIDFYQYFKPQLENFNKNDKLDLIGFETIPNIHELKAILSWDESILSRPFYIGLSVHEHGVLRDGTTMEEIAQVIKDLGDKINPNFSFLGINCVSFNQSPDILESLHQALPNMALLAYPNSGEVYDTEKKIWLPNSDKLNSWDTVVKQYISSGARIIGGCCRTSPKDIQEISAAVKKYT.

In terms of domain architecture, Hcy-binding spans Leu6 to Val321. Thr138 is subject to Phosphothreonine. Residues Cys239, Cys306, and Cys307 each coordinate Zn(2+).

Zn(2+) serves as cofactor.

It localises to the cytoplasm. The protein resides in the nucleus. It catalyses the reaction S-methyl-L-methionine + L-homocysteine = 2 L-methionine + H(+). Homocysteine S-methyltransferase involved in the conversion of S-adenosylmethionine (AdoMet) to methionine to control the methionine/AdoMet ratio. Also converts S-methylmethionine (SMM) to methionine. This chain is Homocysteine S-methyltransferase 2 (SAM4), found in Saccharomyces cerevisiae (strain ATCC 204508 / S288c) (Baker's yeast).